The following is a 293-amino-acid chain: Probable xyloglucan endotransglucosylase/hydrolase protein 5 (293 aa).

The N-terminal stretch at 1-21 is a signal peptide; the sequence is MGRLSSTLCLTFLILATVAFG. Positions 23-220 constitute a GH16 domain; it reads PPKKSINVPF…WEKAPFVASY (198 aa). The active-site Nucleophile is the glutamate 106. The active-site Proton donor is glutamate 110. Residue glutamate 110 coordinates xyloglucan. Asparagine 114 carries an N-linked (GlcNAc...) asparagine glycan. Xyloglucan-binding positions include 123–125, 133–135, 199–200, and glycine 204; these read QTN, NRE, and DW. Cystine bridges form between cysteine 228/cysteine 237 and cysteine 274/cysteine 287. Arginine 279 provides a ligand contact to xyloglucan.

This sequence belongs to the glycosyl hydrolase 16 family. XTH group 1 subfamily. In terms of processing, contains at least one intrachain disulfide bond essential for its enzymatic activity. As to expression, root specific.

Its subcellular location is the secreted. The protein resides in the cell wall. It is found in the extracellular space. It localises to the apoplast. It catalyses the reaction breaks a beta-(1-&gt;4) bond in the backbone of a xyloglucan and transfers the xyloglucanyl segment on to O-4 of the non-reducing terminal glucose residue of an acceptor, which can be a xyloglucan or an oligosaccharide of xyloglucan.. In terms of biological role, catalyzes xyloglucan endohydrolysis (XEH) and/or endotransglycosylation (XET). Cleaves and religates xyloglucan polymers, an essential constituent of the primary cell wall, and thereby participates in cell wall construction of growing tissues. In Arabidopsis thaliana (Mouse-ear cress), this protein is Probable xyloglucan endotransglucosylase/hydrolase protein 5 (XTH5).